The primary structure comprises 443 residues: ATP-dependent protease ATPase subunit HslU (443 aa).

Residues Ile-18, 60 to 65 (GVGKTE), Asp-256, Glu-321, and Arg-393 contribute to the ATP site.

This sequence belongs to the ClpX chaperone family. HslU subfamily. In terms of assembly, a double ring-shaped homohexamer of HslV is capped on each side by a ring-shaped HslU homohexamer. The assembly of the HslU/HslV complex is dependent on binding of ATP.

It localises to the cytoplasm. In terms of biological role, ATPase subunit of a proteasome-like degradation complex; this subunit has chaperone activity. The binding of ATP and its subsequent hydrolysis by HslU are essential for unfolding of protein substrates subsequently hydrolyzed by HslV. HslU recognizes the N-terminal part of its protein substrates and unfolds these before they are guided to HslV for hydrolysis. In Escherichia coli O17:K52:H18 (strain UMN026 / ExPEC), this protein is ATP-dependent protease ATPase subunit HslU.